The primary structure comprises 133 residues: Phosphoribosyl-AMP cyclohydrolase (133 aa).

Aspartate 90 contacts Mg(2+). Cysteine 91 provides a ligand contact to Zn(2+). Residues aspartate 92 and aspartate 94 each contribute to the Mg(2+) site. Zn(2+) is bound by residues cysteine 107 and cysteine 114.

This sequence belongs to the PRA-CH family. In terms of assembly, homodimer. It depends on Mg(2+) as a cofactor. Zn(2+) is required as a cofactor.

The protein localises to the cytoplasm. It catalyses the reaction 1-(5-phospho-beta-D-ribosyl)-5'-AMP + H2O = 1-(5-phospho-beta-D-ribosyl)-5-[(5-phospho-beta-D-ribosylamino)methylideneamino]imidazole-4-carboxamide. The protein operates within amino-acid biosynthesis; L-histidine biosynthesis; L-histidine from 5-phospho-alpha-D-ribose 1-diphosphate: step 3/9. Catalyzes the hydrolysis of the adenine ring of phosphoribosyl-AMP. The polypeptide is Phosphoribosyl-AMP cyclohydrolase (Streptomyces avermitilis (strain ATCC 31267 / DSM 46492 / JCM 5070 / NBRC 14893 / NCIMB 12804 / NRRL 8165 / MA-4680)).